The sequence spans 320 residues: Malate dehydrogenase (320 aa).

NAD(+) is bound by residues 10-15 (GAGQIG) and Asp34. Substrate-binding residues include Arg83 and Arg89. Residues Asn96 and 119–121 (ITN) each bind NAD(+). 2 residues coordinate substrate: Asn121 and Arg152. Residue His176 is the Proton acceptor of the active site.

This sequence belongs to the LDH/MDH superfamily. MDH type 3 family.

It carries out the reaction (S)-malate + NAD(+) = oxaloacetate + NADH + H(+). Functionally, catalyzes the reversible oxidation of malate to oxaloacetate. The sequence is that of Malate dehydrogenase from Roseobacter denitrificans (strain ATCC 33942 / OCh 114) (Erythrobacter sp. (strain OCh 114)).